Consider the following 115-residue polypeptide: Flagellar transcriptional regulator FlhD (115 aa).

The protein belongs to the FlhD family. As to quaternary structure, homodimer; disulfide-linked. Forms a heterohexamer composed of two FlhC and four FlhD subunits. Each FlhC binds a FlhD dimer, forming a heterotrimer, and a hexamer assembles by dimerization of two heterotrimers.

The protein localises to the cytoplasm. Functionally, functions in complex with FlhC as a master transcriptional regulator that regulates transcription of several flagellar and non-flagellar operons by binding to their promoter region. Activates expression of class 2 flagellar genes, including fliA, which is a flagellum-specific sigma factor that turns on the class 3 genes. Also regulates genes whose products function in a variety of physiological pathways. The polypeptide is Flagellar transcriptional regulator FlhD (Edwardsiella ictaluri (strain 93-146)).